A 240-amino-acid polypeptide reads, in one-letter code: Manganese transport system ATP-binding protein MntB (240 aa).

An ABC transporter domain is found at 1-233; it reads MNIQGLTIAY…KIQFAYGDAP (233 aa). 33–40 lines the ATP pocket; that stretch reads GPNGAGKS.

The protein belongs to the ABC transporter superfamily.

It localises to the cell membrane. This protein is probably a component of a manganese permease, a binding protein-dependent, ATP-driven transport system. Probably responsible for energy coupling to the transport system. This Listeria innocua serovar 6a (strain ATCC BAA-680 / CLIP 11262) protein is Manganese transport system ATP-binding protein MntB (mntB).